The sequence spans 473 residues: 6-phospho-beta-glucosidase (473 aa).

The active-site Proton donor is the Glu-174. Glu-366 (nucleophile) is an active-site residue.

Belongs to the glycosyl hydrolase 1 family.

It carries out the reaction 6-phospho-beta-D-glucosyl-(1-&gt;4)-D-glucose + H2O = D-glucose 6-phosphate + D-glucose. This Clostridium longisporum protein is 6-phospho-beta-glucosidase (abgA).